The primary structure comprises 279 residues: Esterase CG5412 (279 aa).

Residues Ser133, Asp191, and His218 each act as charge relay system in the active site. Positions 249 to 279 (QSGNASFVDSGAEDDNDAEVAAMTAELDESD) are disordered.

Belongs to the LovG family.

In Drosophila melanogaster (Fruit fly), this protein is Esterase CG5412.